The primary structure comprises 1187 residues: ATP-dependent DNA helicase MPH1 (1187 aa).

The region spanning 144–311 is the Helicase ATP-binding domain; that stretch reads IVERAFYDNL…QIIDNLNISK (168 aa). Position 157–164 (157–164) interacts with ATP; it reads LPTGLGKT. A DEAH box motif is present at residues 259–262; sequence DEAH. Residues 486–681 form the Helicase C-terminal domain; it reads ELDDFFKNHE…FIQLRPQHRM (196 aa). 3 disordered regions span residues 542–576, 781–848, and 941–1003; these read VENFGKKKQKGQTKKKKDERPSTRSSSENAQMTGM, DKLV…NNQV, and PEKP…LGVK. The span at 547–556 shows a compositional bias: basic residues; it reads KKKQKGQTKK. The segment covering 564–576 has biased composition (polar residues); it reads TRSSSENAQMTGM. Positions 781-817 are enriched in basic and acidic residues; that stretch reads DKLVDSDSESEVDKENENVIQEVDKSKNQEQNDHIIT. A compositionally biased stretch (polar residues) spans 822-848; it reads TEQSVAGNTKSTTNGTSYSEPENNNQV. The span at 967-977 shows a compositional bias: low complexity; that stretch reads SNSISIPSSTT. Residues 980-989 are compositionally biased toward basic and acidic residues; sequence SHNEVTRKVV.

This sequence belongs to the DEAD box helicase family. DEAH subfamily. FANCM sub-subfamily. As to quaternary structure, interacts with the MHF histone-fold complex to form the FANCM-MHF complex.

Its subcellular location is the nucleus. The catalysed reaction is ATP + H2O = ADP + phosphate + H(+). ATP-dependent DNA helicase involved in DNA damage repair by homologous recombination and in genome maintenance. Capable of unwinding D-loops. Plays a role in limiting crossover recombinants during mitotic DNA double-strand break (DSB) repair. Component of a FANCM-MHF complex which promotes gene conversion at blocked replication forks, probably by reversal of the stalled fork. The polypeptide is ATP-dependent DNA helicase MPH1 (Candida albicans (strain SC5314 / ATCC MYA-2876) (Yeast)).